The following is a 147-amino-acid chain: Cytochrome c' (147 aa).

Residues 1-21 (MKRMMIVAALAALTTTTVAQA) form the signal peptide. Heme c is bound by residues arginine 31, threonine 87, glutamate 88, cysteine 137, cysteine 140, and histidine 141.

In terms of assembly, homodimer. Post-translationally, binds 1 heme c group covalently per subunit.

Functionally, cytochrome c' is the most widely occurring bacterial c-type cytochrome. Cytochromes c' are high-spin proteins and the heme has no sixth ligand. Their exact function is not known. The chain is Cytochrome c' from Rhodospirillum rubrum (strain ATCC 11170 / ATH 1.1.1 / DSM 467 / LMG 4362 / NCIMB 8255 / S1).